Consider the following 639-residue polypeptide: 1-deoxy-D-xylulose-5-phosphate synthase (639 aa).

Thiamine diphosphate contacts are provided by residues H79 and 120–122 (GHS). Position 151 (D151) interacts with Mg(2+). Thiamine diphosphate is bound by residues 152–153 (GS), N180, Y289, and E371. N180 provides a ligand contact to Mg(2+).

This sequence belongs to the transketolase family. DXPS subfamily. In terms of assembly, homodimer. The cofactor is Mg(2+). Requires thiamine diphosphate as cofactor.

It catalyses the reaction D-glyceraldehyde 3-phosphate + pyruvate + H(+) = 1-deoxy-D-xylulose 5-phosphate + CO2. It functions in the pathway metabolic intermediate biosynthesis; 1-deoxy-D-xylulose 5-phosphate biosynthesis; 1-deoxy-D-xylulose 5-phosphate from D-glyceraldehyde 3-phosphate and pyruvate: step 1/1. Functionally, catalyzes the acyloin condensation reaction between C atoms 2 and 3 of pyruvate and glyceraldehyde 3-phosphate to yield 1-deoxy-D-xylulose-5-phosphate (DXP). This chain is 1-deoxy-D-xylulose-5-phosphate synthase, found in Agrobacterium fabrum (strain C58 / ATCC 33970) (Agrobacterium tumefaciens (strain C58)).